Here is a 133-residue protein sequence, read N- to C-terminus: ATP synthase epsilon chain, chloroplastic (133 aa).

Belongs to the ATPase epsilon chain family. F-type ATPases have 2 components, CF(1) - the catalytic core - and CF(0) - the membrane proton channel. CF(1) has five subunits: alpha(3), beta(3), gamma(1), delta(1), epsilon(1). CF(0) has three main subunits: a, b and c.

The protein resides in the plastid. It is found in the chloroplast thylakoid membrane. In terms of biological role, produces ATP from ADP in the presence of a proton gradient across the membrane. This is ATP synthase epsilon chain, chloroplastic from Psilotum nudum (Whisk fern).